Reading from the N-terminus, the 266-residue chain is Gasdermin bGSDM (266 aa).

Cysteine 3 carries the S-palmitoyl cysteine lipid modification. The next 4 beta stranded transmembrane spans lie at 69-85, 97-115, 163-180, and 189-205; these read ISGQ…GLSI, KLGL…FEFQ, KFTI…ELTI, and GNVK…KICY.

This sequence belongs to the bacterial gasdermin family. Monomer. In terms of assembly, forms large, homooligomeric ring-shaped pores when inserted in membranes. Post-translationally, palmitoylation helps stabilize the inactive state; may self palmitoylate. Palmitoylation plays a significant role in pore formation.

The protein localises to the cytoplasm. Its subcellular location is the cell inner membrane. Its activity is regulated as follows. The full-length protein before cleavage is inactive: intramolecular interactions between the N-terminal domain and the C-terminal region as well as the lipid modification, mediate autoinhibition. The pyroptosis-like-inducing activity is carried by the released N-terminal domain (Gasdermin bGSDM, N-terminus). In terms of biological role, precursor of a pore-forming protein involved in defense against bacteriophages. Expression of bGSDM and the neighboring protease gene (Ga0182885_104520) is toxic in E.coli. Cleavage of this precursor by its dedicated protease releases the active moiety (gasdermin bGSDM, N-terminus) which inserts into membranes, forming pores and triggering cell death. Pore-forming protein that causes membrane permeabilization via a pyroptosis-like activity. Makes ring-like pores when released. The protein is Gasdermin bGSDM of Desulfuromonadales bacterium.